The chain runs to 161 residues: 2-C-methyl-D-erythritol 2,4-cyclodiphosphate synthase (161 aa).

A divalent metal cation-binding residues include D10 and H12. 4-CDP-2-C-methyl-D-erythritol 2-phosphate is bound by residues 10-12 and 36-37; these read DVH and HS. H44 contacts a divalent metal cation. 4-CDP-2-C-methyl-D-erythritol 2-phosphate contacts are provided by residues 58 to 60, 63 to 67, 102 to 108, 134 to 137, F141, and R144; these read DIG, FPDTD, AQAPKML, and TTTE.

It belongs to the IspF family. Homotrimer. The cofactor is a divalent metal cation.

The catalysed reaction is 4-CDP-2-C-methyl-D-erythritol 2-phosphate = 2-C-methyl-D-erythritol 2,4-cyclic diphosphate + CMP. The protein operates within isoprenoid biosynthesis; isopentenyl diphosphate biosynthesis via DXP pathway; isopentenyl diphosphate from 1-deoxy-D-xylulose 5-phosphate: step 4/6. In terms of biological role, involved in the biosynthesis of isopentenyl diphosphate (IPP) and dimethylallyl diphosphate (DMAPP), two major building blocks of isoprenoid compounds. Catalyzes the conversion of 4-diphosphocytidyl-2-C-methyl-D-erythritol 2-phosphate (CDP-ME2P) to 2-C-methyl-D-erythritol 2,4-cyclodiphosphate (ME-CPP) with a corresponding release of cytidine 5-monophosphate (CMP). This Shewanella loihica (strain ATCC BAA-1088 / PV-4) protein is 2-C-methyl-D-erythritol 2,4-cyclodiphosphate synthase.